We begin with the raw amino-acid sequence, 118 residues long: Small ribosomal subunit protein uS13 (118 aa).

The disordered stretch occupies residues 94-118 (SLPLRGQRTKTNARTRKGPRKPIRK).

Belongs to the universal ribosomal protein uS13 family. In terms of assembly, part of the 30S ribosomal subunit. Forms a loose heterodimer with protein S19. Forms two bridges to the 50S subunit in the 70S ribosome.

Functionally, located at the top of the head of the 30S subunit, it contacts several helices of the 16S rRNA. In the 70S ribosome it contacts the 23S rRNA (bridge B1a) and protein L5 of the 50S subunit (bridge B1b), connecting the 2 subunits; these bridges are implicated in subunit movement. Contacts the tRNAs in the A and P-sites. This Shewanella sediminis (strain HAW-EB3) protein is Small ribosomal subunit protein uS13.